The chain runs to 232 residues: MIPWLSSDSLFPPLHTALIQPNGLLAVGGDLSPRRLIEAYSQGIFPWFNDGDPILWWSPDPRMVLFPRELKVSRSLQKSLRKGNYEIRTDRNFTPVMRACAAPRRDSCGTWIQNKMIFAYSALHEMGFAHSVETWMDGELVGGLYGVALGRVFFGESMFSRVSNASKIAFVHLVRQLERWGFEMIDCQMKTAHLASLGAREIPREEFSQRLKELVNYMERGEKWCFDHEQVE.

It belongs to the L/F-transferase family.

It is found in the cytoplasm. It carries out the reaction N-terminal L-lysyl-[protein] + L-leucyl-tRNA(Leu) = N-terminal L-leucyl-L-lysyl-[protein] + tRNA(Leu) + H(+). It catalyses the reaction N-terminal L-arginyl-[protein] + L-leucyl-tRNA(Leu) = N-terminal L-leucyl-L-arginyl-[protein] + tRNA(Leu) + H(+). The catalysed reaction is L-phenylalanyl-tRNA(Phe) + an N-terminal L-alpha-aminoacyl-[protein] = an N-terminal L-phenylalanyl-L-alpha-aminoacyl-[protein] + tRNA(Phe). Functions in the N-end rule pathway of protein degradation where it conjugates Leu, Phe and, less efficiently, Met from aminoacyl-tRNAs to the N-termini of proteins containing an N-terminal arginine or lysine. The chain is Leucyl/phenylalanyl-tRNA--protein transferase from Nitrosospira multiformis (strain ATCC 25196 / NCIMB 11849 / C 71).